Reading from the N-terminus, the 146-residue chain is Allograft inflammatory factor 1 (146 aa).

Residue Ser1 is modified to N-acetylserine. Lys10 carries the post-translational modification N6-acetyllysine. Ser38 bears the Phosphoserine mark. In terms of domain architecture, EF-hand 1 spans 44 to 79; it reads RKLEAFKQKYMEFDLNGNGDIDIMSLKRMLEKLGVP. Positions 57, 59, 61, 63, and 99 each coordinate Ca(2+). An EF-hand 2; degenerate domain is found at 81–115; that stretch reads THLELKKLIKEVSSGSGETFSYSIFLKMMLGKRSA. The tract at residues 127-146 is disordered; that stretch reads AREQEKPTGPPAKKAISELP.

As to quaternary structure, homodimer (Potential). Monomer. Interacts with LCP1. In terms of tissue distribution, microglial cells in the central nervous system and dendritic cells and macrophages in several organs.

It localises to the cytoplasm. It is found in the cytoskeleton. The protein localises to the cell projection. Its subcellular location is the ruffle membrane. The protein resides in the phagocytic cup. Actin-binding protein that enhances membrane ruffling and RAC activation. Enhances the actin-bundling activity of LCP1. Binds calcium. Plays a role in RAC signaling and in phagocytosis. May play a role in macrophage activation and function. Promotes the proliferation of vascular smooth muscle cells and of T-lymphocytes. Enhances lymphocyte migration. Plays a role in vascular inflammation. Has a dual influence on glucose-induced insulin secretion: inhibition at low concentration and stimulation at high concentrations. This Sus scrofa (Pig) protein is Allograft inflammatory factor 1 (AIF1).